The sequence spans 360 residues: Vomilenine reductase (360 aa).

In terms of domain architecture, Enoyl reductase (ER) spans 23-351; the sequence is GLLSPFNFSR…KADVKYRFVI (329 aa). Residue Cys50 participates in Zn(2+) binding. Ser52 lines the an alcohol pocket. NADP(+) is bound at residue Ser52. Zn(2+) contacts are provided by Asp53, His72, Glu73, Cys103, Cys106, Cys109, Cys117, and Cys166. His72 is a binding site for an alcohol. NADP(+)-binding residues include Leu192, Gly194, Leu195, Ser214, Thr215, Ser216, Lys219, Lys220, Val277, Ala279, Ser301, and Arg348.

The protein belongs to the zinc-containing alcohol dehydrogenase family. Class-P subfamily. In terms of assembly, homodimer. The cofactor is Zn(2+). In terms of tissue distribution, confined to roots.

The protein resides in the cytoplasm. The enzyme catalyses (2R)-1,2-dihydrovomilenine + NADP(+) = vomilenine + NADPH + H(+). Its pathway is alkaloid biosynthesis; ajmaline biosynthesis. Inhibited by EDTA and p-hydroxymercuribenzoate, a sulfhydryl reagent. Alcohol dehydrogenase involved in the biosynthesis of ajmaline-type monoterpenoid indole alkaloids (MIAs) natural products, important plant-derived pharmaceuticals used in the therapy of heart disorders. Catalyzes the conversion of vomilenine to 1,2-dihydrovomilenine, an intermediate chemical in the biosynthesis of ajmaline. The polypeptide is Vomilenine reductase (Rauvolfia serpentina (Serpentine wood)).